Reading from the N-terminus, the 63-residue chain is UPF0391 membrane protein lpg2415 (63 aa).

Helical transmembrane passes span 4-24 (WALI…RGVA) and 33-53 (VLFF…LLGG).

The protein belongs to the UPF0391 family.

The protein resides in the cell membrane. In Legionella pneumophila subsp. pneumophila (strain Philadelphia 1 / ATCC 33152 / DSM 7513), this protein is UPF0391 membrane protein lpg2415.